The following is a 422-amino-acid chain: Keratin, type I cytoskeletal 23 (422 aa).

Over residues 1–13 (MNSGHSFSQTPSA) the composition is skewed to polar residues. The tract at residues 1-71 (MNSGHSFSQT…GRSSPLLGGN (71 aa)) is head. The segment at 1–73 (MNSGHSFSQT…SSPLLGGNGK (73 aa)) is disordered. Positions 72 to 107 (GKATMQNLNDRLASYLEKVRALEEANMKLESRILKW) are coil 1A. Residues 72 to 382 (GKATMQNLND…RLLEGESEGT (311 aa)) enclose the IF rod domain. The segment at 108–125 (HQQRDPGSKKDYSQYEEN) is linker 1. A coil 1B region spans residues 126 to 217 (ITHLQEQIVD…KHHEQEMEKH (92 aa)). Residues 218-240 (HVPSDFNVNVKVDTGPREDLIKV) form a linker 12 region. Residues 241-378 (LEDMRQEYEL…TTYRRLLEGE (138 aa)) form a coil 2 region. The segment at 379 to 422 (SEGTREESKSSMKVSATPKIKAITQETINGRLVLCQVNEIQKHA) is rod-like helical tail.

The protein belongs to the intermediate filament family. As to quaternary structure, heterotetramer of two type I and two type II keratins.

The protein is Keratin, type I cytoskeletal 23 (KRT23) of Homo sapiens (Human).